We begin with the raw amino-acid sequence, 600 residues long: NADH-quinone oxidoreductase subunit C/D (600 aa).

The NADH dehydrogenase I subunit C stretch occupies residues 1–190 (MVNNMTDLTA…DPFELTKAKQ (190 aa)). Residues 214-600 (DFMFLNLGPN…IDFVMSDVDR (387 aa)) are NADH dehydrogenase I subunit D.

The protein in the N-terminal section; belongs to the complex I 30 kDa subunit family. This sequence in the C-terminal section; belongs to the complex I 49 kDa subunit family. As to quaternary structure, NDH-1 is composed of 13 different subunits. Subunits NuoB, CD, E, F, and G constitute the peripheral sector of the complex.

The protein resides in the cell inner membrane. It catalyses the reaction a quinone + NADH + 5 H(+)(in) = a quinol + NAD(+) + 4 H(+)(out). NDH-1 shuttles electrons from NADH, via FMN and iron-sulfur (Fe-S) centers, to quinones in the respiratory chain. The immediate electron acceptor for the enzyme in this species is believed to be ubiquinone. Couples the redox reaction to proton translocation (for every two electrons transferred, four hydrogen ions are translocated across the cytoplasmic membrane), and thus conserves the redox energy in a proton gradient. The polypeptide is NADH-quinone oxidoreductase subunit C/D (Citrobacter koseri (strain ATCC BAA-895 / CDC 4225-83 / SGSC4696)).